We begin with the raw amino-acid sequence, 217 residues long: Acyl-homoserine-lactone synthase (217 aa).

Belongs to the autoinducer synthase family.

It carries out the reaction a fatty acyl-[ACP] + S-adenosyl-L-methionine = an N-acyl-L-homoserine lactone + S-methyl-5'-thioadenosine + holo-[ACP] + H(+). Its function is as follows. Required for the synthesis of OHHL (N-(3-oxohexanoyl)-L-homoserine lactone), an autoinducer molecule which binds to ExpR and thus acts in virulence (soft rot disease) through the activation of genes for plant tissue macerating enzymes. This is Acyl-homoserine-lactone synthase (expI) from Pectobacterium parmentieri.